A 262-amino-acid chain; its full sequence is Small ribosomal subunit protein uS2 (262 aa).

The protein belongs to the universal ribosomal protein uS2 family.

The protein is Small ribosomal subunit protein uS2 of Borrelia garinii subsp. bavariensis (strain ATCC BAA-2496 / DSM 23469 / PBi) (Borreliella bavariensis).